We begin with the raw amino-acid sequence, 48 residues long: MVREKKNPSSAAVSAASVKGDAGPTQHYGGGKRTSQNQQYKKHNMGQS.

Residues 1 to 48 (MVREKKNPSSAAVSAASVKGDAGPTQHYGGGKRTSQNQQYKKHNMGQS) form a disordered region. A compositionally biased stretch (low complexity) spans 9–18 (SSAAVSAASV).

This is an uncharacterized protein from Bacillus subtilis (strain 168).